The chain runs to 80 residues: Cell division activator CedA (80 aa).

This sequence belongs to the CedA family.

Its function is as follows. Activates the cell division inhibited by chromosomal DNA over-replication. The sequence is that of Cell division activator CedA from Salmonella choleraesuis (strain SC-B67).